The chain runs to 702 residues: Arginine decarboxylase 1 (702 aa).

Lys151 carries the N6-(pyridoxal phosphate)lysine modification. 336-346 is a substrate binding site; sequence IDVGGGLGIDY. The segment covering 668 to 686 has biased composition (low complexity); the sequence is ASGESSGMSSDSEGSAAGA. The interval 668-702 is disordered; that stretch reads ASGESSGMSSDSEGSAAGAAEEDDDEWEFMRGLTV.

This sequence belongs to the Orn/Lys/Arg decarboxylase class-II family. SpeA subfamily. Pyridoxal 5'-phosphate is required as a cofactor. It depends on Mg(2+) as a cofactor. As to expression, expressed in roots, leaves and stems (at protein level).

The enzyme catalyses L-arginine + H(+) = agmatine + CO2. It functions in the pathway amine and polyamine biosynthesis; agmatine biosynthesis; agmatine from L-arginine: step 1/1. The chain is Arginine decarboxylase 1 (ADC1) from Oryza sativa subsp. japonica (Rice).